Here is a 205-residue protein sequence, read N- to C-terminus: Spermatogenesis-associated protein 24 (205 aa).

Residues 17–166 adopt a coiled-coil conformation; sequence LAFDQLRDVI…QQRQSFRNHM (150 aa). The tract at residues 138 to 185 is required for interaction with CBX5 and TBPL1; sequence EDILNGKENEIKELQQVISQQRQSFRNHMSDFRIQKQQETYMAQVLDQ. The disordered stretch occupies residues 182–205; the sequence is VLDQKHKKTSGTRRARSRQCSREK. The span at 186–205 shows a compositional bias: basic residues; sequence KHKKTSGTRRARSRQCSREK.

Belongs to the SPATA24 family. Homodimer. Interacts with CBX3, CBX5, GMNN, GTF2B, TBPL1 and the polycomb proteins PHCF2, RNF2 and SCMH1 but not with CBX1 or PCGF2. Highly expressed in the testis and is mainly localized in the spermatids. Also expressed in the lung, heart, spleen and epididymis.

It is found in the cytoplasm. The protein localises to the nucleus. It localises to the nucleolus. The protein resides in the nucleoplasm. Its function is as follows. Binds DNA with high affinity but does not bind to TATA boxes. Synergises with GMNN and TBP in activation of TATA box-containing promoters and with GMNN and TBPL1 in activation of the NF1 TATA-less promoter. May play a role in cytoplasm movement and removal during spermiogenesis. This Rattus norvegicus (Rat) protein is Spermatogenesis-associated protein 24 (Spata24).